The primary structure comprises 200 residues: High mobility group protein B3 (200 aa).

Lys-3 bears the N6-acetyllysine mark. 2 DNA-binding regions (HMG box) span residues 9–79 (PKGK…KDYG) and 93–161 (PKRP…ADYK). Residue Cys-23 is modified to Cysteine sulfonic acid (-SO3H); alternate. Residues Cys-23 and Cys-45 are joined by a disulfide bond. 2 positions are modified to N6-acetyllysine: Lys-30 and Lys-43. Residue Cys-45 is modified to Cysteine sulfonic acid (-SO3H); alternate. The segment at 71–97 (YDREMKDYGPAKGGKKKKDPNAPKRPP) is disordered. The residue at position 98 (Ser-98) is a Phosphoserine. Cysteine sulfonic acid (-SO3H) is present on Cys-104. N6-acetyllysine is present on residues Lys-112 and Lys-139. Residues 161-200 (KSKGKFDGAKGPAKVARKKVEEEEEEEEEEEEEEEEEEDE) form a disordered region. Over residues 182 to 200 (EEEEEEEEEEEEEEEEEDE) the composition is skewed to acidic residues.

Belongs to the HMGB family. In terms of processing, reduction/oxidation of cysteine residues Cys-23, Cys-45 and Cys-104 and a possible intramolecular disulfide bond involving Cys-23 and Cys-45 give rise to different redox forms with specific functional activities in various cellular compartments: 1- fully reduced HMGB3 (HMGB3C23hC45hC104h), 2- disulfide HMGB3 (HMGB3C23-C45C104h) and 3- sulfonyl HMGB3 (HMGB3C23soC45soC104so). In terms of tissue distribution, expressed in bone marrow cells, specifically in primitive Lin-, c-kit+, Sca-1+, IL-7Ralpha- cells, and Ter119+ erythroid cells.

The protein localises to the nucleus. Its subcellular location is the chromosome. The protein resides in the cytoplasm. Its function is as follows. Multifunctional protein with various roles in different cellular compartments. May act in a redox sensitive manner. Associates with chromatin and binds DNA with a preference for non-canonical DNA structures such as single-stranded DNA. Can bend DNA and enhance DNA flexibility by looping thus providing a mechanism to promote activities on various gene promoters. Proposed to be involved in the innate immune response to nucleic acids by acting as a cytoplasmic promiscuous immunogenic DNA/RNA sensor. Negatively regulates B-cell and myeloid cell differentiation. In hematopoietic stem cells may regulate the balance between self-renewal and differentiation. Involved in negative regulation of canonical Wnt signaling. This chain is High mobility group protein B3 (Hmgb3), found in Mus musculus (Mouse).